Consider the following 243-residue polypeptide: Protein DMP8 (243 aa).

The interval 1 to 37 is disordered; the sequence is MEKTEESVGIRVYTTTTTQNPSPTSSRSPKPVPLSSL. Low complexity predominate over residues 14–29; sequence TTTTTQNPSPTSSRSP. The next 4 helical transmembrane spans lie at 70–90, 98–118, 174–194, and 212–232; these read MLVNFLPTGTLLMFEMVLPTI, GINTLMIHLLLLLCAMSCFFF, VNDFVHSVMSVLVFMAIAFSD, and VMESFPLMVGIVCSALFLVFP.

It belongs to the plant DMP1 protein family. As to expression, restricted to flowers.

It localises to the endoplasmic reticulum membrane. The protein localises to the vacuole membrane. Its function is as follows. Involved in membrane remodeling. In Arabidopsis thaliana (Mouse-ear cress), this protein is Protein DMP8.